Consider the following 211-residue polypeptide: MQLVERFLCEPFPPLAQRIIQEGVVVNDRILKIDHFLNHRIDTDLMSAIGVELATRLQPFAAELILTAEASGIPPALATALAARLPLVYAKKYDPDVPVPALTRHIHSPTRDRQVQLAISARFIPAGSRVAIVDDFLANGRTALALADMVYEAGATVVAAAFVVEKQFQEGRLLLQKLGVPIISLAQITRFVDGRPLIYGWPSSVPGQSDG.

Positions 31 and 38 each coordinate xanthine. 138-142 lines the 5-phospho-alpha-D-ribose 1-diphosphate pocket; it reads ANGRT. Residue Lys166 coordinates xanthine.

It belongs to the purine/pyrimidine phosphoribosyltransferase family. Xpt subfamily. As to quaternary structure, homodimer.

It localises to the cytoplasm. The enzyme catalyses XMP + diphosphate = xanthine + 5-phospho-alpha-D-ribose 1-diphosphate. It participates in purine metabolism; XMP biosynthesis via salvage pathway; XMP from xanthine: step 1/1. In terms of biological role, converts the preformed base xanthine, a product of nucleic acid breakdown, to xanthosine 5'-monophosphate (XMP), so it can be reused for RNA or DNA synthesis. This is Xanthine phosphoribosyltransferase from Chloroflexus aurantiacus (strain ATCC 29364 / DSM 637 / Y-400-fl).